The chain runs to 78 residues: D-alanyl carrier protein (78 aa).

The Carrier domain occupies 1–78; the sequence is MEFREQVLDL…KIVEVLEELR (78 aa). At Ser36 the chain carries O-(pantetheine 4'-phosphoryl)serine.

The protein belongs to the DltC family. Post-translationally, 4'-phosphopantetheine is transferred from CoA to a specific serine of apo-DCP.

It localises to the cytoplasm. It functions in the pathway cell wall biogenesis; lipoteichoic acid biosynthesis. Its function is as follows. Carrier protein involved in the D-alanylation of lipoteichoic acid (LTA). The loading of thioester-linked D-alanine onto DltC is catalyzed by D-alanine--D-alanyl carrier protein ligase DltA. The DltC-carried D-alanyl group is further transferred to cell membrane phosphatidylglycerol (PG) by forming an ester bond, probably catalyzed by DltD. D-alanylation of LTA plays an important role in modulating the properties of the cell wall in Gram-positive bacteria, influencing the net charge of the cell wall. The polypeptide is D-alanyl carrier protein (Staphylococcus xylosus).